The chain runs to 619 residues: MATRPGPLTEWPWHRLGNFKYVVMAPVVAHGARRVMRNGWGDLDIAFSLILPSLLLRMIHNQIWISLSRYQTARSKHRIVDRGIEFDQVDRERGWDDQILFNGLVFYAGYLAMPSVRRMPVWRTDGAVVTALVHTGPVEFLYYWFHRALHHHFLYSRYHSHHHASIVTEPITSVIHPFAEHVVYFILFAIPILSTIYLGNVSAMGIVGYIAYIDFMNNMGHCNFELVPEWIFQIFPPLKYLIYTPSFHSLHHTQFRTNYSLFMPFYDYIYNTMDKSSDELYESSLKGTEETPDLVHLTHMTNLQSAYHLRIGIASIASKPYSDSAWYMWTLWPLAWLSMVLAWIYGSSAFVVERIKLNKMKMQTWAIPRYNFQYGLTWEREPINDLIEKAILDADMKGVKVISLGLLNQAKQLNGNGELFRQKYPKLGVRIVDGSGLATAVVLKSIPSDAKKVFLRTGTSKIARAIAIALCDRGVQVIMNEKEVYHMLKSQIPENRASYLKLSSDNVPQLWIVHNIDDNEQKMAPKGTIFIPISQFPLKKLRKDCTYMSTPAMRIPEEMKNIHSCENWLPRRVMSAWHIAGILHALEGWNMHECGDEMMDIEKSWSAAIRHGFLPLTKA.

The next 5 helical transmembrane spans lie at 45 to 65 (IAFS…QIWI), 94 to 114 (GWDD…LAMP), 126 to 146 (GAVV…YWFH), 178 to 198 (FAEH…TIYL), and 325 to 345 (AWYM…AWIY). One can recognise a Fatty acid hydroxylase domain in the interval 138 to 272 (VEFLYYWFHR…MPFYDYIYNT (135 aa)).

The protein belongs to the sterol desaturase family. In terms of assembly, homodimer.

The protein localises to the endoplasmic reticulum membrane. The enzyme catalyses a long-chain fatty aldehyde + 2 NADPH + O2 + H(+) = a long-chain alkane + formate + 2 NADP(+) + H2O. Functionally, aldehyde decarbonylase involved in the conversion of aldehydes to alkanes. Core component of a very-long-chain alkane synthesis complex. The polypeptide is Very-long-chain aldehyde decarbonylase GL1-4 (Oryza sativa subsp. indica (Rice)).